The chain runs to 423 residues: Transcription factor AP-2-epsilon (423 aa).

Positions M1–H108 are disordered. Low complexity predominate over residues G14–L27. The PPxY motif motif lies at Y50–Y55. Over residues Q57–Y70 the composition is skewed to low complexity. Over residues S79–S93 the composition is skewed to polar residues. The interval R276 to D405 is H-S-H (helix-span-helix), dimerization.

This sequence belongs to the AP-2 family. In terms of assembly, binds DNA as a dimer. Can form homodimers or heterodimers with other AP-2 family members.

It localises to the nucleus. Its function is as follows. Sequence-specific DNA-binding protein that interacts with inducible viral and cellular enhancer elements to regulate transcription of selected genes. AP-2 factors bind to the consensus sequence 5'-GCCNNNGGC-3' and activate genes involved in a large spectrum of important biological functions. This Danio rerio (Zebrafish) protein is Transcription factor AP-2-epsilon.